The following is a 208-amino-acid chain: Ribosomal RNA small subunit methyltransferase G (208 aa).

S-adenosyl-L-methionine contacts are provided by residues G77, L82, V128 to E129, and R142.

Belongs to the methyltransferase superfamily. RNA methyltransferase RsmG family.

The protein localises to the cytoplasm. The catalysed reaction is guanosine(527) in 16S rRNA + S-adenosyl-L-methionine = N(7)-methylguanosine(527) in 16S rRNA + S-adenosyl-L-homocysteine. Specifically methylates the N7 position of guanine in position 527 of 16S rRNA. The sequence is that of Ribosomal RNA small subunit methyltransferase G from Chromohalobacter salexigens (strain ATCC BAA-138 / DSM 3043 / CIP 106854 / NCIMB 13768 / 1H11).